Consider the following 77-residue polypeptide: UPF0154 protein LCK_00994 (77 aa).

Residues 5-25 (FGILIFVLGLVIGLVIGFFVA) traverse the membrane as a helical segment. The disordered stretch occupies residues 50-77 (SMGQKPSQKKLNQMMAQMKQQSEQSQKK).

Belongs to the UPF0154 family.

The protein localises to the cell membrane. This is UPF0154 protein LCK_00994 from Leuconostoc citreum (strain KM20).